The following is a 238-amino-acid chain: Probable succinyl-CoA:3-ketoacid coenzyme A transferase subunit A (238 aa).

Gly24–Gly30 contributes to the CoA binding site.

Belongs to the 3-oxoacid CoA-transferase subunit A family. As to quaternary structure, heterodimer of a subunit A and a subunit B.

The catalysed reaction is a 3-oxo acid + succinyl-CoA = a 3-oxoacyl-CoA + succinate. In Bacillus subtilis (strain 168), this protein is Probable succinyl-CoA:3-ketoacid coenzyme A transferase subunit A (scoA).